We begin with the raw amino-acid sequence, 447 residues long: Tubulin beta chain (447 aa).

Glutamine 11, glutamate 69, serine 138, glycine 142, threonine 143, glycine 144, asparagine 204, and asparagine 226 together coordinate GTP. Position 69 (glutamate 69) interacts with Mg(2+). The tract at residues 424 to 447 (QYQEASVSEGEEEYDEEAPLEGEE) is disordered. The segment covering 432–447 (EGEEEYDEEAPLEGEE) has biased composition (acidic residues).

This sequence belongs to the tubulin family. As to quaternary structure, dimer of alpha and beta chains. A typical microtubule is a hollow water-filled tube with an outer diameter of 25 nm and an inner diameter of 15 nM. Alpha-beta heterodimers associate head-to-tail to form protofilaments running lengthwise along the microtubule wall with the beta-tubulin subunit facing the microtubule plus end conferring a structural polarity. Microtubules usually have 13 protofilaments but different protofilament numbers can be found in some organisms and specialized cells. Mg(2+) is required as a cofactor.

It localises to the cytoplasm. The protein resides in the cytoskeleton. Functionally, tubulin is the major constituent of microtubules, a cylinder consisting of laterally associated linear protofilaments composed of alpha- and beta-tubulin heterodimers. Microtubules grow by the addition of GTP-tubulin dimers to the microtubule end, where a stabilizing cap forms. Below the cap, tubulin dimers are in GDP-bound state, owing to GTPase activity of alpha-tubulin. The sequence is that of Tubulin beta chain (TUB1) from Dothistroma septosporum (Red band needle blight fungus).